The sequence spans 222 residues: uncharacterized protein (222 aa).

Residues 1-27 (MSFTRRKFVLGMGTVIFFTGSASSLLA) constitute a signal peptide (tat-type signal). 4Fe-4S ferredoxin-type domains follow at residues 37–67 (YAMI…AQGS), 83–114 (TQYH…RDEQ), and 115–144 (GIVR…LNPV). C46, C49, C52, C56, C92, C95, C100, C104, C124, C127, C130, C134, C151, C154, C167, and C171 together coordinate [4Fe-4S] cluster.

Exported by the Tat system. The position of the signal peptide cleavage has not been experimentally proven. Can also be exported by the Sec system.

This is an uncharacterized protein from Escherichia coli (strain K12).